Reading from the N-terminus, the 431-residue chain is MDNLQSIKAQFIAQINAYQPEKDRDIVVFQCNTETTFSLLAWLKAQQYYPQFYLHGRDGATKWASIGQVRQFSDVSAAAHFIQEQQLALLGGLQFYGDALFVLPRLLLQQRQDGMTITLFIDGKQFEQDKLVALACLSTFEKQTALQTVKQEISLISQKADQAEWCRWVEQGLQKIKQGELSKIVLANERCFKTAAPLAATDLLAESEKYNLGCYHFMLAESEQRAFIGSSPELLYRRHGLQLKTEALAGTAFMGEDEQQNQQQSDWLLHDKKNEYENQLVVDGICQNLQPFVQQITIEKVELKKLRKVQHLRRRISAQLKAGCGDKDILLAMHPTAAVAGLPQLEAKQALRKLENFDRTWYAGTLGVMGPAYADFCVTIRSAFIEQAENDSQLCVFAGAGIVEGSIPLLEWREIERKAMGLVSLLQQNQL.

Lys183 acts as the Proton acceptor in catalysis. Catalysis depends on Glu233, which acts as the Proton donor. Residues Glu277 and Glu414 each coordinate Mg(2+).

Belongs to the isochorismate synthase family. The cofactor is Mg(2+).

The enzyme catalyses chorismate = isochorismate. The protein operates within quinol/quinone metabolism; 1,4-dihydroxy-2-naphthoate biosynthesis; 1,4-dihydroxy-2-naphthoate from chorismate: step 1/7. Its pathway is quinol/quinone metabolism; menaquinone biosynthesis. Its function is as follows. Catalyzes the conversion of chorismate to isochorismate. This Pasteurella multocida (strain Pm70) protein is Isochorismate synthase MenF.